Consider the following 223-residue polypeptide: uncharacterized protein (223 aa).

The N-terminal stretch at 1-22 (MHLKKALCPALCTFLIHLCLHA) is a signal peptide. One can recognise a VWFA domain in the interval 30–204 (DIFLMIDKSR…RSIAAAHSKR (175 aa)). The interval 199–223 (AAHSKRPTPTPPAKESSPRYTPSLD) is disordered.

This is an uncharacterized protein from Treponema pallidum (strain Nichols).